The primary structure comprises 282 residues: S-formylglutathione hydrolase (282 aa).

Lysine 4 bears the N6-succinyllysine mark. Residue serine 149 is the Charge relay system of the active site. The residue at position 200 (lysine 200) is an N6-acetyllysine. Catalysis depends on charge relay system residues aspartate 226 and histidine 260.

The protein belongs to the esterase D family. As to quaternary structure, homodimer.

The protein localises to the cytoplasm. It is found in the cytoplasmic vesicle. The catalysed reaction is S-formylglutathione + H2O = formate + glutathione + H(+). Its function is as follows. Serine hydrolase involved in the detoxification of formaldehyde. This chain is S-formylglutathione hydrolase (Esd), found in Rattus norvegicus (Rat).